The primary structure comprises 334 residues: N-acetyl-gamma-glutamyl-phosphate reductase (334 aa).

Cys-154 is an active-site residue.

It belongs to the NAGSA dehydrogenase family. Type 1 subfamily.

It localises to the cytoplasm. It carries out the reaction N-acetyl-L-glutamate 5-semialdehyde + phosphate + NADP(+) = N-acetyl-L-glutamyl 5-phosphate + NADPH + H(+). The protein operates within amino-acid biosynthesis; L-arginine biosynthesis; N(2)-acetyl-L-ornithine from L-glutamate: step 3/4. Functionally, catalyzes the NADPH-dependent reduction of N-acetyl-5-glutamyl phosphate to yield N-acetyl-L-glutamate 5-semialdehyde. The sequence is that of N-acetyl-gamma-glutamyl-phosphate reductase from Yersinia pestis.